Reading from the N-terminus, the 90-residue chain is Small ribosomal subunit protein uS15c (90 aa).

The protein belongs to the universal ribosomal protein uS15 family. Part of the 30S ribosomal subunit.

Its subcellular location is the plastid. It localises to the chloroplast. The sequence is that of Small ribosomal subunit protein uS15c (rps15) from Buxus microphylla (Littleleaf boxwood).